A 218-amino-acid polypeptide reads, in one-letter code: Hypoxanthine-guanine phosphoribosyltransferase (218 aa).

Lys69 serves as a coordination point for GMP. Lys103 is subject to N6-acetyllysine. Lys115 participates in a covalent cross-link: Glycyl lysine isopeptide (Lys-Gly) (interchain with G-Cter in SUMO1); alternate. A Glycyl lysine isopeptide (Lys-Gly) (interchain with G-Cter in SUMO2); alternate cross-link involves residue Lys115. GMP is bound by residues 134–142, Lys166, 186–188, and Asp194; these read EDIIDTGKT and KFV. The active-site Proton acceptor is the Asp138. Phosphothreonine is present on Thr142. Asp194 is a binding site for Mg(2+).

It belongs to the purine/pyrimidine phosphoribosyltransferase family. Homotetramer. Mg(2+) is required as a cofactor.

The protein localises to the cytoplasm. It carries out the reaction IMP + diphosphate = hypoxanthine + 5-phospho-alpha-D-ribose 1-diphosphate. It catalyses the reaction GMP + diphosphate = guanine + 5-phospho-alpha-D-ribose 1-diphosphate. Its pathway is purine metabolism; IMP biosynthesis via salvage pathway; IMP from hypoxanthine: step 1/1. In terms of biological role, converts guanine to guanosine monophosphate, and hypoxanthine to inosine monophosphate. Transfers the 5-phosphoribosyl group from 5-phosphoribosylpyrophosphate onto the purine. Plays a central role in the generation of purine nucleotides through the purine salvage pathway. The polypeptide is Hypoxanthine-guanine phosphoribosyltransferase (Hprt1) (Mus musculus (Mouse)).